Reading from the N-terminus, the 334-residue chain is Holliday junction branch migration complex subunit RuvB (334 aa).

The segment at 1 to 182 (MDDRMIDGEL…FGVLSRLEYY (182 aa)) is large ATPase domain (RuvB-L). ATP contacts are provided by residues Leu21, Arg22, Gly63, Lys66, Thr67, Thr68, 129–131 (EDF), Arg172, Tyr182, and Arg219. Thr67 is a Mg(2+) binding site. The interval 183 to 253 (EIKDLCNIVE…STKQALEMLQ (71 aa)) is small ATPAse domain (RuvB-S). The head domain (RuvB-H) stretch occupies residues 256–334 (DAGLDHVDHK…HLGIKRTGED (79 aa)). Positions 311 and 316 each coordinate DNA.

This sequence belongs to the RuvB family. In terms of assembly, homohexamer. Forms an RuvA(8)-RuvB(12)-Holliday junction (HJ) complex. HJ DNA is sandwiched between 2 RuvA tetramers; dsDNA enters through RuvA and exits via RuvB. An RuvB hexamer assembles on each DNA strand where it exits the tetramer. Each RuvB hexamer is contacted by two RuvA subunits (via domain III) on 2 adjacent RuvB subunits; this complex drives branch migration. In the full resolvosome a probable DNA-RuvA(4)-RuvB(12)-RuvC(2) complex forms which resolves the HJ.

It localises to the cytoplasm. The catalysed reaction is ATP + H2O = ADP + phosphate + H(+). Its function is as follows. The RuvA-RuvB-RuvC complex processes Holliday junction (HJ) DNA during genetic recombination and DNA repair, while the RuvA-RuvB complex plays an important role in the rescue of blocked DNA replication forks via replication fork reversal (RFR). RuvA specifically binds to HJ cruciform DNA, conferring on it an open structure. The RuvB hexamer acts as an ATP-dependent pump, pulling dsDNA into and through the RuvAB complex. RuvB forms 2 homohexamers on either side of HJ DNA bound by 1 or 2 RuvA tetramers; 4 subunits per hexamer contact DNA at a time. Coordinated motions by a converter formed by DNA-disengaged RuvB subunits stimulates ATP hydrolysis and nucleotide exchange. Immobilization of the converter enables RuvB to convert the ATP-contained energy into a lever motion, pulling 2 nucleotides of DNA out of the RuvA tetramer per ATP hydrolyzed, thus driving DNA branch migration. The RuvB motors rotate together with the DNA substrate, which together with the progressing nucleotide cycle form the mechanistic basis for DNA recombination by continuous HJ branch migration. Branch migration allows RuvC to scan DNA until it finds its consensus sequence, where it cleaves and resolves cruciform DNA. The chain is Holliday junction branch migration complex subunit RuvB from Oceanobacillus iheyensis (strain DSM 14371 / CIP 107618 / JCM 11309 / KCTC 3954 / HTE831).